Reading from the N-terminus, the 257-residue chain is 3-methyl-2-oxobutanoate hydroxymethyltransferase (257 aa).

Mg(2+)-binding residues include Asp-42 and Asp-86. 3-methyl-2-oxobutanoate-binding positions include 42-43 (DS), Asp-86, and Lys-116. Glu-118 contacts Mg(2+). The active-site Proton acceptor is Glu-185.

Belongs to the PanB family. In terms of assembly, homodecamer; pentamer of dimers. The cofactor is Mg(2+).

The protein resides in the cytoplasm. It carries out the reaction 3-methyl-2-oxobutanoate + (6R)-5,10-methylene-5,6,7,8-tetrahydrofolate + H2O = 2-dehydropantoate + (6S)-5,6,7,8-tetrahydrofolate. The protein operates within cofactor biosynthesis; (R)-pantothenate biosynthesis; (R)-pantoate from 3-methyl-2-oxobutanoate: step 1/2. Its function is as follows. Catalyzes the reversible reaction in which hydroxymethyl group from 5,10-methylenetetrahydrofolate is transferred onto alpha-ketoisovalerate to form ketopantoate. The sequence is that of 3-methyl-2-oxobutanoate hydroxymethyltransferase from Prochlorococcus marinus (strain MIT 9301).